Reading from the N-terminus, the 1013-residue chain is MDIS1-interacting receptor like kinase 1 (1013 aa).

Residues 1-23 form the signal peptide; the sequence is MKMKIIVLFLYYCYIGSTSSVLA. The Extracellular portion of the chain corresponds to 24-633; the sequence is SIDNVNELSV…SSHSSLHGKR (610 aa). 7 N-linked (GlcNAc...) asparagine glycosylation sites follow: N61, N82, N101, N137, N146, N151, and N155. LRR repeat units follow at residues 70–94, 95–117, 119–137, 139–163, 164–186, 187–213, 215–234, 235–259, 260–283, 284–307, 308–331, 333–355, 357–379, 381–403, 405–426, 427–451, 453–475, 477–498, 499–523, 525–547, 548–571, and 573–595; these read NGNV…ISQL, SSLV…SIPP, KSID…LFSN, SLGL…LGNL, VSLE…SFKN, LQKL…QLPS, ETAI…EFGN, INSL…LGKL, KSLE…IGSI, TTLK…ITKL, KNLQ…ISSL, QLQV…LGKN, PLQW…LCNK, NLTK…LSTC, SLVR…GFGK, LEKL…ISDS, SLSF…ILSI, NLQA…QFQD, CPSL…IASC, KLVS…ITTM, SALA…IGTS, and ALEL…GFLK. N199 carries N-linked (GlcNAc...) asparagine glycosylation. N-linked (GlcNAc...) asparagine glycosylation occurs at N271. A glycan (N-linked (GlcNAc...) asparagine) is linked at N341. N-linked (GlcNAc...) asparagine glycans are attached at residues N381, N389, and N417. N-linked (GlcNAc...) asparagine glycosylation is found at N535, N557, and N578. A helical transmembrane segment spans residues 634–654; sequence IVAGWLIGIASVLALGILTIV. Residues 655 to 1013 lie on the Cytoplasmic side of the membrane; it reads TRTLYKKWYS…FSTSPVNGLL (359 aa). T691 carries the post-translational modification Phosphothreonine. Positions 699–983 constitute a Protein kinase domain; the sequence is IKESNMIGMG…SMLGEAKPRR (285 aa). ATP is bound by residues 705–713 and K728; that span reads IGMGATGIV. Residue T710 is modified to Phosphothreonine; by autocatalysis. Phosphothreonine; by autocatalysis is present on residues T741 and T742. A phosphotyrosine mark is found at Y777 and Y818. D831 acts as the Proton acceptor in catalysis. Position 862 is a phosphothreonine; by autocatalysis (T862). Residue S864 is modified to Phosphoserine; by autocatalysis. Y872 carries the post-translational modification Phosphotyrosine. Y879 is modified (phosphotyrosine; by autocatalysis). A phosphothreonine; by autocatalysis mark is found at T880 and T992. Residues 976-1013 are disordered; that stretch reads LGEAKPRRKSNSNEENTSRSLAEKHSSVFSTSPVNGLL. Polar residues predominate over residues 1002 to 1013; that stretch reads SVFSTSPVNGLL.

This sequence belongs to the protein kinase superfamily. Ser/Thr protein kinase family. As to quaternary structure, homodimer. Interacts with MDIS1 and LURE1.2. Post-translationally, autophosphorylation induced by the interaction with LURE1.2. In terms of tissue distribution, expressed in pollen tubes.

The protein resides in the cell membrane. The enzyme catalyses L-seryl-[protein] + ATP = O-phospho-L-seryl-[protein] + ADP + H(+). The catalysed reaction is L-threonyl-[protein] + ATP = O-phospho-L-threonyl-[protein] + ADP + H(+). Its function is as follows. Involved in the regulation of procambium maintenance and polarity during vascular-tissue development. Involved in the pollen tube perception of the female signal. Phosphorylates MDSI1. In Arabidopsis thaliana (Mouse-ear cress), this protein is MDIS1-interacting receptor like kinase 1.